The chain runs to 444 residues: Serine--tRNA ligase (444 aa).

243-245 is an L-serine binding site; that stretch reads TAE. ATP is bound at residue 274-276; sequence RSE. Residue Glu-297 participates in L-serine binding. An ATP-binding site is contributed by 361 to 364; it reads EISS. Position 397 (Ser-397) interacts with L-serine.

Belongs to the class-II aminoacyl-tRNA synthetase family. Type-1 seryl-tRNA synthetase subfamily. In terms of assembly, homodimer. The tRNA molecule binds across the dimer.

The protein resides in the cytoplasm. It carries out the reaction tRNA(Ser) + L-serine + ATP = L-seryl-tRNA(Ser) + AMP + diphosphate + H(+). The catalysed reaction is tRNA(Sec) + L-serine + ATP = L-seryl-tRNA(Sec) + AMP + diphosphate + H(+). It participates in aminoacyl-tRNA biosynthesis; selenocysteinyl-tRNA(Sec) biosynthesis; L-seryl-tRNA(Sec) from L-serine and tRNA(Sec): step 1/1. Functionally, catalyzes the attachment of serine to tRNA(Ser). Is also able to aminoacylate tRNA(Sec) with serine, to form the misacylated tRNA L-seryl-tRNA(Sec), which will be further converted into selenocysteinyl-tRNA(Sec). This Acidobacterium capsulatum (strain ATCC 51196 / DSM 11244 / BCRC 80197 / JCM 7670 / NBRC 15755 / NCIMB 13165 / 161) protein is Serine--tRNA ligase.